The sequence spans 424 residues: Virion nicking-joining enzyme (424 aa).

2 PLD phosphodiesterase domains span residues L110–S137 and Y320–Y346.

This sequence belongs to the orthopoxvirus OPG042 family.

It is found in the virion. Functionally, DNA nicking enzyme that cleaves extruded cruciform DNA at its tip. Probably nicks viral hairpins. This is Virion nicking-joining enzyme (OPG042) from Vaccinia virus (strain Western Reserve) (VACV).